The primary structure comprises 67 residues: ATP synthase F(0) complex subunit 8 (67 aa).

A helical transmembrane segment spans residues threonine 8 to phenylalanine 24. The residue at position 54 (lysine 54) is an N6-acetyllysine; alternate. Lysine 54 bears the N6-succinyllysine; alternate mark. Lysine 57 carries the N6-acetyllysine modification.

It belongs to the ATPase protein 8 family. As to quaternary structure, component of the ATP synthase complex composed at least of ATP5F1A/subunit alpha, ATP5F1B/subunit beta, ATP5MC1/subunit c (homooctomer), MT-ATP6/subunit a, MT-ATP8/subunit 8, ATP5ME/subunit e, ATP5MF/subunit f, ATP5MG/subunit g, ATP5MK/subunit k, ATP5MJ/subunit j, ATP5F1C/subunit gamma, ATP5F1D/subunit delta, ATP5F1E/subunit epsilon, ATP5PF/subunit F6, ATP5PB/subunit b, ATP5PD/subunit d, ATP5PO/subunit OSCP. ATP synthase complex consists of a soluble F(1) head domain (subunits alpha(3) and beta(3)) - the catalytic core - and a membrane F(0) domain - the membrane proton channel (subunits c, a, 8, e, f, g, k and j). These two domains are linked by a central stalk (subunits gamma, delta, and epsilon) rotating inside the F1 region and a stationary peripheral stalk (subunits F6, b, d, and OSCP). Interacts with PRICKLE3.

The protein localises to the mitochondrion membrane. Subunit 8, of the mitochondrial membrane ATP synthase complex (F(1)F(0) ATP synthase or Complex V) that produces ATP from ADP in the presence of a proton gradient across the membrane which is generated by electron transport complexes of the respiratory chain. ATP synthase complex consist of a soluble F(1) head domain - the catalytic core - and a membrane F(1) domain - the membrane proton channel. These two domains are linked by a central stalk rotating inside the F(1) region and a stationary peripheral stalk. During catalysis, ATP synthesis in the catalytic domain of F(1) is coupled via a rotary mechanism of the central stalk subunits to proton translocation. In vivo, can only synthesize ATP although its ATP hydrolase activity can be activated artificially in vitro. Part of the complex F(0) domain. This chain is ATP synthase F(0) complex subunit 8, found in Canis lupus familiaris (Dog).